A 441-amino-acid chain; its full sequence is Probable dihydroorotase-like protein (441 aa).

The segment at 121 to 140 is disordered; it reads VNAHHQPPGDPQAENRPDSA.

Belongs to the metallo-dependent hydrolases superfamily. DHOase family. PyrC' subfamily.

Non-functional DHOase. This chain is Probable dihydroorotase-like protein (pyrC'), found in Synechocystis sp. (strain ATCC 27184 / PCC 6803 / Kazusa).